We begin with the raw amino-acid sequence, 38 residues long: Large ribosomal subunit protein bL36 (38 aa).

The protein belongs to the bacterial ribosomal protein bL36 family.

This Chloroherpeton thalassium (strain ATCC 35110 / GB-78) protein is Large ribosomal subunit protein bL36.